The primary structure comprises 189 residues: Adenylate kinase (189 aa).

An ATP-binding site is contributed by 11–16 (GSGKGT). Residues 31-60 (STGDVLRAEIKNGTELGKTAKGYIDQGQLI) form an NMP region. AMP-binding positions include threonine 32, arginine 37, 58 to 60 (QLI), 86 to 89 (GFPR), and glutamine 93. Positions 127–137 (KRGKESGRADD) are LID. Residue arginine 128 coordinates ATP. 2 residues coordinate AMP: arginine 134 and arginine 145. ATP is bound at residue glycine 173.

It belongs to the adenylate kinase family. As to quaternary structure, monomer.

The protein localises to the cytoplasm. It carries out the reaction AMP + ATP = 2 ADP. The protein operates within purine metabolism; AMP biosynthesis via salvage pathway; AMP from ADP: step 1/1. In terms of biological role, catalyzes the reversible transfer of the terminal phosphate group between ATP and AMP. Plays an important role in cellular energy homeostasis and in adenine nucleotide metabolism. This chain is Adenylate kinase, found in Bacteroides fragilis (strain ATCC 25285 / DSM 2151 / CCUG 4856 / JCM 11019 / LMG 10263 / NCTC 9343 / Onslow / VPI 2553 / EN-2).